Consider the following 552-residue polypeptide: Putative transport protein ECA4401 (552 aa).

Helical transmembrane passes span 4–24 (IALTVSMLALVAVLGLWIGNW), 26–46 (IYGVGLGIGGVLFGGIIVGHV), 65–85 (FGLILFVYTIGIQVGPGFFSS), 90–112 (GLRLNAFALLTVFLGSVVTVMLH), and 158–178 (TGYAMAYPLGICGILLVMWLM). RCK C-terminal domains follow at residues 191–276 (KQFE…VIGN) and 279–361 (ETSL…IVGN). The next 6 helical transmembrane spans lie at 371-391 (MLPVFIGIGLGVLLGSVPLMV), 393-413 (GFPVALRLGLAGGPLVVALVL), 439-459 (IVLFLSVVGLKSGGDFVDTLL), 464-484 (VWWIGYGALITIVPLLAVGIL), 493-513 (YLTLCGMLAGSMTDPPALAFA), and 530-550 (VYPLAMFLRIMSPQLLAVLFL).

This sequence belongs to the AAE transporter (TC 2.A.81) family. YidE subfamily.

The protein localises to the cell membrane. This chain is Putative transport protein ECA4401, found in Pectobacterium atrosepticum (strain SCRI 1043 / ATCC BAA-672) (Erwinia carotovora subsp. atroseptica).